We begin with the raw amino-acid sequence, 318 residues long: Cytochrome f (318 aa).

The first 34 residues, 1 to 34, serve as a signal peptide directing secretion; sequence MKNNYLANLIKTLQAIVVSVALLAPLVLPSAVNA. Residues Phe35, Cys55, Cys58, and His59 each contribute to the heme site. Residues 284–304 form a helical membrane-spanning segment; the sequence is VKGLIAFFFTVILAQILLVLK.

This sequence belongs to the cytochrome f family. The 4 large subunits of the cytochrome b6-f complex are cytochrome b6, subunit IV (17 kDa polypeptide, petD), cytochrome f and the Rieske protein, while the 4 small subunits are PetG, PetL, PetM and PetN. The complex functions as a dimer. Requires heme as cofactor.

Its subcellular location is the plastid. The protein resides in the chloroplast thylakoid membrane. In terms of biological role, component of the cytochrome b6-f complex, which mediates electron transfer between photosystem II (PSII) and photosystem I (PSI), cyclic electron flow around PSI, and state transitions. The chain is Cytochrome f from Rhodomonas salina (Cryptomonas salina).